The chain runs to 432 residues: Adenylosuccinate synthetase (432 aa).

Residues 13-19 and 41-43 each bind GTP; these read GDEGKGK and GHT. Asp-14 serves as the catalytic Proton acceptor. Mg(2+) is bound by residues Asp-14 and Gly-41. IMP-binding positions include 14 to 17, 39 to 42, Thr-130, Arg-144, Gln-225, Thr-240, and Arg-304; these read DEGK and NAGH. The active-site Proton donor is the His-42. 300 to 306 is a binding site for substrate; sequence ATTGRRR. GTP contacts are provided by residues Arg-306, 332–334, and 415–417; these read KLD and STG.

The protein belongs to the adenylosuccinate synthetase family. As to quaternary structure, homodimer. It depends on Mg(2+) as a cofactor.

The protein localises to the cytoplasm. The catalysed reaction is IMP + L-aspartate + GTP = N(6)-(1,2-dicarboxyethyl)-AMP + GDP + phosphate + 2 H(+). It participates in purine metabolism; AMP biosynthesis via de novo pathway; AMP from IMP: step 1/2. In terms of biological role, plays an important role in the de novo pathway of purine nucleotide biosynthesis. Catalyzes the first committed step in the biosynthesis of AMP from IMP. The chain is Adenylosuccinate synthetase from Salmonella choleraesuis (strain SC-B67).